Consider the following 153-residue polypeptide: 3-hydroxyacyl-[acyl-carrier-protein] dehydratase FabZ (153 aa).

His-54 is an active-site residue.

The protein belongs to the thioester dehydratase family. FabZ subfamily.

The protein resides in the cytoplasm. It catalyses the reaction a (3R)-hydroxyacyl-[ACP] = a (2E)-enoyl-[ACP] + H2O. In terms of biological role, involved in unsaturated fatty acids biosynthesis. Catalyzes the dehydration of short chain beta-hydroxyacyl-ACPs and long chain saturated and unsaturated beta-hydroxyacyl-ACPs. The chain is 3-hydroxyacyl-[acyl-carrier-protein] dehydratase FabZ from Chlamydia muridarum (strain MoPn / Nigg).